A 490-amino-acid polypeptide reads, in one-letter code: UDP-glucosyl transferase 73M2 (490 aa).

The active-site Proton acceptor is H20. D124 (charge relay) is an active-site residue. S297, W353, A354, H371, N375, S376, E379, and Y393 together coordinate UDP.

Belongs to the UDP-glycosyltransferase family. As to expression, mainly expressed in flowers, flower buds and young leaves, and, to a lesser extent, in old leaves, stems and roots.

It participates in secondary metabolite biosynthesis; terpenoid biosynthesis. Component of the oleanane-type triterpene saponins (e.g. saponarioside A and saponarioside B) biosynthetic pathway, leading to the production of natural products with detergent properties used as traditional sources of soap. A glycosyltransferase that mediates the conversion of QA-triFRX to QA-triFRXX via the elongation of the C-28 sugar chain with a D-xylose. The chain is UDP-glucosyl transferase 73M2 from Saponaria officinalis (Common soapwort).